The primary structure comprises 327 residues: Metal-binding protein YtgA (327 aa).

Residues 1 to 20 (MDAKMGYIFKVMRWIFCFVA) form the signal peptide. Fe(2+)-binding residues include histidine 73, histidine 139, histidine 205, and aspartate 297.

This sequence belongs to the bacterial solute-binding protein 9 family. Monomer.

The protein resides in the periplasm. In terms of biological role, part of the ATP-binding cassette (ABC) transport system YtgABCD involved in metal import. Binds Fe(2+), Mn(2+) and Ni(2+), with a preference for Fe(2+) and delivers them to the membrane permease for translocation into the cytoplasm. The protein is Metal-binding protein YtgA of Chlamydia pneumoniae (Chlamydophila pneumoniae).